A 185-amino-acid chain; its full sequence is Elongation factor P (185 aa).

Belongs to the elongation factor P family.

The protein resides in the cytoplasm. The protein operates within protein biosynthesis; polypeptide chain elongation. Involved in peptide bond synthesis. Stimulates efficient translation and peptide-bond synthesis on native or reconstituted 70S ribosomes in vitro. Probably functions indirectly by altering the affinity of the ribosome for aminoacyl-tRNA, thus increasing their reactivity as acceptors for peptidyl transferase. This chain is Elongation factor P, found in Salinispora arenicola (strain CNS-205).